The sequence spans 290 residues: Putative OX-2 membrane glycoprotein homolog (290 aa).

A signal peptide spans 1-17 (MSSLMLRLLPLLYIISA). Topologically, residues 18-267 (HFVLHPETSP…SDETVFTWTV (250 aa)) are extracellular. The Ig-like V-type domain maps to 23–135 (PETSPSLIYE…TFTVDNEKTS (113 aa)). A disulfide bond links cysteine 41 and cysteine 125. N-linked (GlcNAc...) asparagine; by host glycans are attached at residues asparagine 71, asparagine 104, asparagine 194, and asparagine 202. Positions 146 to 236 (PIVVLYFRYL…TNQKASALVT (91 aa)) constitute an Ig-like C2-type domain. The chain crosses the membrane as a helical span at residues 268–288 (PLILILISVIVLLISVCIVAF). Topologically, residues 289-290 (KS) are cytoplasmic.

Its subcellular location is the membrane. This chain is Putative OX-2 membrane glycoprotein homolog (U85), found in Homo sapiens (Human).